Consider the following 466-residue polypeptide: Asparagine--tRNA ligase (466 aa).

Belongs to the class-II aminoacyl-tRNA synthetase family. In terms of assembly, homodimer.

Its subcellular location is the cytoplasm. The enzyme catalyses tRNA(Asn) + L-asparagine + ATP = L-asparaginyl-tRNA(Asn) + AMP + diphosphate + H(+). The sequence is that of Asparagine--tRNA ligase from Shewanella halifaxensis (strain HAW-EB4).